A 185-amino-acid polypeptide reads, in one-letter code: Nucleoside triphosphate pyrophosphatase (185 aa).

The active-site Proton acceptor is the D70.

Belongs to the Maf family. A divalent metal cation serves as cofactor.

It is found in the cytoplasm. The catalysed reaction is a ribonucleoside 5'-triphosphate + H2O = a ribonucleoside 5'-phosphate + diphosphate + H(+). It carries out the reaction a 2'-deoxyribonucleoside 5'-triphosphate + H2O = a 2'-deoxyribonucleoside 5'-phosphate + diphosphate + H(+). Its function is as follows. Nucleoside triphosphate pyrophosphatase. May have a dual role in cell division arrest and in preventing the incorporation of modified nucleotides into cellular nucleic acids. The chain is Nucleoside triphosphate pyrophosphatase from Nitratiruptor sp. (strain SB155-2).